A 144-amino-acid chain; its full sequence is Large ribosomal subunit protein uL16 (144 aa).

The protein belongs to the universal ribosomal protein uL16 family. In terms of assembly, part of the 50S ribosomal subunit.

Its function is as follows. Binds 23S rRNA and is also seen to make contacts with the A and possibly P site tRNAs. This is Large ribosomal subunit protein uL16 from Lysinibacillus sphaericus (strain C3-41).